A 197-amino-acid chain; its full sequence is Glycerol-3-phosphate acyltransferase (197 aa).

The next 5 helical transmembrane spans lie at 2-22, 53-73, 78-98, 112-132, and 152-174; these read LDVI…AIVV, AGIT…LAWL, PVVA…PVYF, VILA…LAVA, and YMLW…AAIV.

Belongs to the PlsY family. In terms of assembly, probably interacts with PlsX.

It localises to the cell inner membrane. It catalyses the reaction an acyl phosphate + sn-glycerol 3-phosphate = a 1-acyl-sn-glycero-3-phosphate + phosphate. It participates in lipid metabolism; phospholipid metabolism. In terms of biological role, catalyzes the transfer of an acyl group from acyl-phosphate (acyl-PO(4)) to glycerol-3-phosphate (G3P) to form lysophosphatidic acid (LPA). This enzyme utilizes acyl-phosphate as fatty acyl donor, but not acyl-CoA or acyl-ACP. This is Glycerol-3-phosphate acyltransferase from Halorhodospira halophila (strain DSM 244 / SL1) (Ectothiorhodospira halophila (strain DSM 244 / SL1)).